A 1269-amino-acid chain; its full sequence is ATP-dependent helicase/nuclease subunit A (1269 aa).

A UvrD-like helicase ATP-binding domain is found at 17 to 492 (GGWTAEQLEA…LALTANFRSR (476 aa)). Position 38–45 (38–45 (ASAGTGKT)) interacts with ATP. One can recognise a UvrD-like helicase C-terminal domain in the interval 541–838 (AVELHLVERG…RIMSIHKSKG (298 aa)).

It belongs to the helicase family. AddA subfamily. As to quaternary structure, heterodimer of AddA and AddB/RexB. Mg(2+) serves as cofactor.

The enzyme catalyses Couples ATP hydrolysis with the unwinding of duplex DNA by translocating in the 3'-5' direction.. The catalysed reaction is ATP + H2O = ADP + phosphate + H(+). The heterodimer acts as both an ATP-dependent DNA helicase and an ATP-dependent, dual-direction single-stranded exonuclease. Recognizes the chi site generating a DNA molecule suitable for the initiation of homologous recombination. The AddA nuclease domain is required for chi fragment generation; this subunit has the helicase and 3' -&gt; 5' nuclease activities. The sequence is that of ATP-dependent helicase/nuclease subunit A from Pelotomaculum thermopropionicum (strain DSM 13744 / JCM 10971 / SI).